The primary structure comprises 489 residues: Cytochrome P450 2C41 (489 aa).

C434 contributes to the heme binding site.

This sequence belongs to the cytochrome P450 family. It depends on heme as a cofactor.

It is found in the endoplasmic reticulum membrane. The protein resides in the microsome membrane. The enzyme catalyses an organic molecule + reduced [NADPH--hemoprotein reductase] + O2 = an alcohol + oxidized [NADPH--hemoprotein reductase] + H2O + H(+). Cytochromes P450 are a group of heme-thiolate monooxygenases. In liver microsomes, this enzyme is involved in an NADPH-dependent electron transport pathway. It oxidizes a variety of structurally unrelated compounds, including steroids, fatty acids, and xenobiotics. This Canis lupus familiaris (Dog) protein is Cytochrome P450 2C41 (CYP2C41).